The primary structure comprises 467 residues: Tubulointerstitial nephritis antigen-like (467 aa).

A signal peptide spans 1–21 (MWGCPLGLLLLLLAGQAALEA). The SMB domain maps to 49–96 (EQDMCCRGRADECALPYLGATCYCDLFCNRTVSDCCPDFWDFCLGIPP). 5 disulfides stabilise this stretch: C53–C72, C70–C72, C70–C84, C76–C83, and C84–C91. N77 carries N-linked (GlcNAc...) asparagine glycosylation. N160 carries N-linked (GlcNAc...) asparagine glycosylation.

Belongs to the peptidase C1 family. In terms of processing, glycosylated.

It localises to the secreted. May be implicated in the adrenocortical zonation and in mechanisms for repressing the CYP11B1 gene expression in adrenocortical cells. This is a non catalytic peptidase C1 family protein. The sequence is that of Tubulointerstitial nephritis antigen-like (Tinagl1) from Rattus norvegicus (Rat).